A 159-amino-acid chain; its full sequence is Protein NrdI (159 aa).

This sequence belongs to the NrdI family.

In terms of biological role, probably involved in ribonucleotide reductase function. This is Protein NrdI from Rhodococcus erythropolis (strain PR4 / NBRC 100887).